We begin with the raw amino-acid sequence, 397 residues long: LIM/homeobox protein Lhx9 (397 aa).

LIM zinc-binding domains lie at 69-130 and 131-193; these read ALCA…RFSV and QRCA…LLQG. Disordered regions lie at residues 248 to 272 and 330 to 364; these read ENEA…RMRT and ENGG…TLTD. Positions 267-326 form a DNA-binding region, homeobox; it reads TKRMRTSFKHHQLRTMKSYFAINHNPDAKDLKQLAQKTGLTKRVLQVWFQNARAKFRRNL.

In terms of assembly, interacts with LDB1 and LDB2.

It localises to the nucleus. Functionally, involved in gonadal development. The chain is LIM/homeobox protein Lhx9 (LHX9) from Bos taurus (Bovine).